A 385-amino-acid polypeptide reads, in one-letter code: Putative glutamate--cysteine ligase 2 (385 aa).

This sequence belongs to the glutamate--cysteine ligase type 2 family. YbdK subfamily.

The enzyme catalyses L-cysteine + L-glutamate + ATP = gamma-L-glutamyl-L-cysteine + ADP + phosphate + H(+). ATP-dependent carboxylate-amine ligase which exhibits weak glutamate--cysteine ligase activity. The polypeptide is Putative glutamate--cysteine ligase 2 (Herpetosiphon aurantiacus (strain ATCC 23779 / DSM 785 / 114-95)).